The following is a 120-amino-acid chain: Ribonuclease P protein component (120 aa).

This sequence belongs to the RnpA family. Consists of a catalytic RNA component (M1 or rnpB) and a protein subunit.

The catalysed reaction is Endonucleolytic cleavage of RNA, removing 5'-extranucleotides from tRNA precursor.. Functionally, RNaseP catalyzes the removal of the 5'-leader sequence from pre-tRNA to produce the mature 5'-terminus. It can also cleave other RNA substrates such as 4.5S RNA. The protein component plays an auxiliary but essential role in vivo by binding to the 5'-leader sequence and broadening the substrate specificity of the ribozyme. This chain is Ribonuclease P protein component, found in Pseudoalteromonas atlantica (strain T6c / ATCC BAA-1087).